Consider the following 372-residue polypeptide: Phospho-N-acetylmuramoyl-pentapeptide-transferase (372 aa).

The next 10 helical transmembrane spans lie at Arg-25–Ile-45, Thr-73–Leu-93, Val-98–Ile-118, Phe-134–Asn-154, Ser-176–Ile-196, Gly-211–Ala-231, Leu-251–His-271, Ile-275–Met-295, Ile-300–Ile-320, and Gln-349–Leu-369.

It belongs to the glycosyltransferase 4 family. MraY subfamily. Mg(2+) is required as a cofactor.

It localises to the cell inner membrane. The enzyme catalyses UDP-N-acetyl-alpha-D-muramoyl-L-alanyl-gamma-D-glutamyl-meso-2,6-diaminopimeloyl-D-alanyl-D-alanine + di-trans,octa-cis-undecaprenyl phosphate = di-trans,octa-cis-undecaprenyl diphospho-N-acetyl-alpha-D-muramoyl-L-alanyl-D-glutamyl-meso-2,6-diaminopimeloyl-D-alanyl-D-alanine + UMP. The protein operates within cell wall biogenesis; peptidoglycan biosynthesis. In terms of biological role, catalyzes the initial step of the lipid cycle reactions in the biosynthesis of the cell wall peptidoglycan: transfers peptidoglycan precursor phospho-MurNAc-pentapeptide from UDP-MurNAc-pentapeptide onto the lipid carrier undecaprenyl phosphate, yielding undecaprenyl-pyrophosphoryl-MurNAc-pentapeptide, known as lipid I. The sequence is that of Phospho-N-acetylmuramoyl-pentapeptide-transferase from Acinetobacter baylyi (strain ATCC 33305 / BD413 / ADP1).